Reading from the N-terminus, the 262-residue chain is Small ribosomal subunit protein uS2 (262 aa).

It belongs to the universal ribosomal protein uS2 family.

This is Small ribosomal subunit protein uS2 from Rhodospirillum rubrum (strain ATCC 11170 / ATH 1.1.1 / DSM 467 / LMG 4362 / NCIMB 8255 / S1).